Here is an 898-residue protein sequence, read N- to C-terminus: Phosphoenolpyruvate carboxylase (898 aa).

Active-site residues include histidine 138 and lysine 561.

It belongs to the PEPCase type 1 family. The cofactor is Mg(2+).

It carries out the reaction oxaloacetate + phosphate = phosphoenolpyruvate + hydrogencarbonate. Its function is as follows. Forms oxaloacetate, a four-carbon dicarboxylic acid source for the tricarboxylic acid cycle. The protein is Phosphoenolpyruvate carboxylase of Streptococcus pneumoniae serotype 2 (strain D39 / NCTC 7466).